Consider the following 147-residue polypeptide: Small ribosomal subunit protein uS5 (147 aa).

In terms of domain architecture, S5 DRBM spans 9-72 (FQEVVVNIGR…DDAFKNLIHV (64 aa)).

This sequence belongs to the universal ribosomal protein uS5 family. In terms of assembly, part of the 30S ribosomal subunit. Contacts proteins S4 and S8.

In terms of biological role, with S4 and S12 plays an important role in translational accuracy. Functionally, located at the back of the 30S subunit body where it stabilizes the conformation of the head with respect to the body. The sequence is that of Small ribosomal subunit protein uS5 from Helicobacter pylori (strain J99 / ATCC 700824) (Campylobacter pylori J99).